The primary structure comprises 367 residues: Cyclic AMP-responsive element-binding protein 3-like protein 4 (367 aa).

Positions 1–52 (MELGCPELLEPPEDIFSTGSFLELGFNGPPSKVPGLQKSESDDFLNLFIDPN) are required for transcriptional activation. Residues 1-267 (MELGCPELLE…QTSSRAAQTS (267 aa)) are Cytoplasmic-facing. Residues 58 to 81 (ETSPGSDSGVSEDPGSPAPQAPSS) form a disordered region. Positions 189–252 (ILKKIRRKIR…ISLVAQVHQL (64 aa)) constitute a bZIP domain. The interval 191–230 (KKIRRKIRNKQSAQDSRRRKKEYIDGLESRVAACSEQNQK) is basic motif. Residues 231–252 (LQRKVQELERQNISLVAQVHQL) are leucine-zipper. A helical; Signal-anchor for type II membrane protein transmembrane segment spans residues 268 to 288 (TCVLILLFSLALIILPSFSPF). Topologically, residues 289–367 (QSQPEARSEG…IRGMVHADEM (79 aa)) are lumenal. Residue Asn338 is glycosylated (N-linked (GlcNAc...) asparagine).

This sequence belongs to the bZIP family. ATF subfamily. As to quaternary structure, binds DNA as a dimer. Forms a heterodimer with CREM isoform Delta. In terms of processing, controlled by regulated intramembrane proteolysis (RIP). Following ER stress a fragment containing the cytoplasmic transcription factor domain is released by proteolysis. The cleavage seems to be performed sequentially by site-1 and site-2 proteases (PS1 and PS2). PS1 cleavage may be suppressed by a determinant in the C-terminal region.

The protein localises to the endoplasmic reticulum membrane. The protein resides in the nucleus. In terms of biological role, transcriptional activator that may play a role in the unfolded protein response. Binds to the UPR element (UPRE) but not to CRE element. Preferentially binds DNA with to the consensus sequence 5'-T[GT]ACGT[GA][GT]-3' and has transcriptional activation activity from UPRE. Binds to NF-kappa-B site and has transcriptional activation activity from NF-kappa-B-containing regulatory elements. Increases the binding of CREM isoform Delta with CRE. The CREM isoform Delta-CREB3L4 heterodimer functions through CRE but not through UPRE and may recruit HIRA to CRE to regulate histone exchange. This is Cyclic AMP-responsive element-binding protein 3-like protein 4 (Creb3l4) from Rattus norvegicus (Rat).